Consider the following 180-residue polypeptide: Translation initiation factor IF-3 (180 aa).

The protein belongs to the IF-3 family. As to quaternary structure, monomer.

The protein resides in the cytoplasm. Functionally, IF-3 binds to the 30S ribosomal subunit and shifts the equilibrium between 70S ribosomes and their 50S and 30S subunits in favor of the free subunits, thus enhancing the availability of 30S subunits on which protein synthesis initiation begins. This Salmonella paratyphi A (strain ATCC 9150 / SARB42) protein is Translation initiation factor IF-3.